The primary structure comprises 523 residues: Peptide chain release factor 3 (523 aa).

The region spanning 10–277 is the tr-type G domain; sequence EKRRTFAIIS…SFVDLAPAPE (268 aa). GTP-binding positions include 19 to 26, 87 to 91, and 141 to 144; these read SHPDAGKT, DTPGH, and NKLD.

This sequence belongs to the TRAFAC class translation factor GTPase superfamily. Classic translation factor GTPase family. PrfC subfamily.

Its subcellular location is the cytoplasm. In terms of biological role, increases the formation of ribosomal termination complexes and stimulates activities of RF-1 and RF-2. It binds guanine nucleotides and has strong preference for UGA stop codons. It may interact directly with the ribosome. The stimulation of RF-1 and RF-2 is significantly reduced by GTP and GDP, but not by GMP. In Lactobacillus acidophilus (strain ATCC 700396 / NCK56 / N2 / NCFM), this protein is Peptide chain release factor 3.